The following is a 554-amino-acid chain: Hydroxylamine reductase (554 aa).

C3, C6, C18, and C25 together coordinate [2Fe-2S] cluster. Hybrid [4Fe-2O-2S] cluster contacts are provided by H252, E276, C320, C408, C436, C461, E495, and K497. C408 bears the Cysteine persulfide mark.

Belongs to the HCP family. The cofactor is [2Fe-2S] cluster. Hybrid [4Fe-2O-2S] cluster serves as cofactor.

The protein localises to the cytoplasm. The enzyme catalyses A + NH4(+) + H2O = hydroxylamine + AH2 + H(+). In terms of biological role, catalyzes the reduction of hydroxylamine to form NH(3) and H(2)O. The protein is Hydroxylamine reductase of Shewanella baltica (strain OS155 / ATCC BAA-1091).